The chain runs to 579 residues: Proline--tRNA ligase (579 aa).

Belongs to the class-II aminoacyl-tRNA synthetase family. ProS type 1 subfamily. In terms of assembly, homodimer.

Its subcellular location is the cytoplasm. The enzyme catalyses tRNA(Pro) + L-proline + ATP = L-prolyl-tRNA(Pro) + AMP + diphosphate. In terms of biological role, catalyzes the attachment of proline to tRNA(Pro) in a two-step reaction: proline is first activated by ATP to form Pro-AMP and then transferred to the acceptor end of tRNA(Pro). As ProRS can inadvertently accommodate and process non-cognate amino acids such as alanine and cysteine, to avoid such errors it has two additional distinct editing activities against alanine. One activity is designated as 'pretransfer' editing and involves the tRNA(Pro)-independent hydrolysis of activated Ala-AMP. The other activity is designated 'posttransfer' editing and involves deacylation of mischarged Ala-tRNA(Pro). The misacylated Cys-tRNA(Pro) is not edited by ProRS. This is Proline--tRNA ligase from Hamiltonella defensa subsp. Acyrthosiphon pisum (strain 5AT).